The primary structure comprises 428 residues: Histidine--tRNA ligase (428 aa).

This sequence belongs to the class-II aminoacyl-tRNA synthetase family. Homodimer.

The protein localises to the cytoplasm. It carries out the reaction tRNA(His) + L-histidine + ATP = L-histidyl-tRNA(His) + AMP + diphosphate + H(+). The chain is Histidine--tRNA ligase (hisS) from Chlamydia muridarum (strain MoPn / Nigg).